The primary structure comprises 198 residues: Small ribosomal subunit protein eS1 (198 aa).

This sequence belongs to the eukaryotic ribosomal protein eS1 family.

The polypeptide is Small ribosomal subunit protein eS1 (Nanoarchaeum equitans (strain Kin4-M)).